The following is a 354-amino-acid chain: MRVHEEASEDKEREVEEAPDLMPLSPPPTAAATAAVVAVAGQRLVVGYALTKKKVKSFLQPKLLSLARKKSIHFVSIDETRPLSEQGPFDIILHKLTDKEWQQVLEDYREEHPEVTVLDPPNAIQHLHNRQSMLQEVADLNLSNAYGEVCTPRQLVIMKDPLSIPSAVAKAGLTLPLVAKPLVVDGTSKSHELSLAYVETSLSMLDPPLVLQEFVNHGGILFKVYVVGETIRVVRRFSLPDVNIYDLENNDGIFRFPRVSCATNTAEDAEVDPSIAELPPKPLLEKLGRELRRRLGLRLFNFDMIREHGRKDRYYVIDINYFPGYGKMPGYEHIFIDFLLSLVQNKYKRRLSGS.

Residues 1–16 are compositionally biased toward basic and acidic residues; the sequence is MRVHEEASEDKEREVE. Residues 1–24 are disordered; the sequence is MRVHEEASEDKEREVEEAPDLMPL. The 1D-myo-inositol 1,3,4-trisphosphate site is built by Lys53 and Lys95. The ATP site is built by Arg130 and Lys180. The 208-residue stretch at 140-347 folds into the ATP-grasp domain; it reads LNLSNAYGEV…FLLSLVQNKY (208 aa). His191 and Lys223 together coordinate 1D-myo-inositol 1,3,4-trisphosphate. Residues 212 to 223 and Ser238 contribute to the ATP site; that span reads QEFVNHGGILFK. Residues Asp303, Asp318, and Asn320 each coordinate Mg(2+). A 1D-myo-inositol 1,3,4-trisphosphate-binding site is contributed by Asn320.

The protein belongs to the ITPK1 family. As to quaternary structure, monomer. Mg(2+) is required as a cofactor.

The enzyme catalyses 1D-myo-inositol 3,4,5,6-tetrakisphosphate + ATP = 1D-myo-inositol 1,3,4,5,6-pentakisphosphate + ADP + H(+). It catalyses the reaction 1D-myo-inositol 1,3,4-trisphosphate + ATP = 1D-myo-inositol 1,3,4,5-tetrakisphosphate + ADP + H(+). It carries out the reaction 1D-myo-inositol 1,3,4-trisphosphate + ATP = 1D-myo-inositol 1,3,4,6-tetrakisphosphate + ADP + H(+). Its function is as follows. Kinase that can phosphorylate various inositol polyphosphate such as Ins(3,4,5,6)P4 or Ins(1,3,4)P3 and participates in phytic acid biosynthesis in developing seeds. Phytic acid is the primary storage form of phosphorus in cereal grains and other plant seeds. This Oryza sativa subsp. indica (Rice) protein is Inositol-tetrakisphosphate 1-kinase 1 (ITPK1).